The primary structure comprises 248 residues: Probable transcriptional regulatory protein FTM_1203 (248 aa).

The protein belongs to the TACO1 family.

It is found in the cytoplasm. The sequence is that of Probable transcriptional regulatory protein FTM_1203 from Francisella tularensis subsp. mediasiatica (strain FSC147).